A 202-amino-acid chain; its full sequence is N-(5'-phosphoribosyl)anthranilate isomerase (202 aa).

The protein belongs to the TrpF family.

The catalysed reaction is N-(5-phospho-beta-D-ribosyl)anthranilate = 1-(2-carboxyphenylamino)-1-deoxy-D-ribulose 5-phosphate. It functions in the pathway amino-acid biosynthesis; L-tryptophan biosynthesis; L-tryptophan from chorismate: step 3/5. This chain is N-(5'-phosphoribosyl)anthranilate isomerase, found in Geobacter metallireducens (strain ATCC 53774 / DSM 7210 / GS-15).